A 587-amino-acid chain; its full sequence is Folylpolyglutamate synthase, mitochondrial (587 aa).

A mitochondrion-targeting transit peptide spans 1-42 (MSWARTHLRSALSLAAVSARGATTEGAARRWLSAWPAPQEPG). 106–109 (GKGS) lines the ATP pocket. Residues Ser130, Glu200, and His228 each coordinate Mg(2+). Positions 363 and 377 each coordinate ATP. The interval 484–508 (PDFLSSPSPEPGRPGSLQPALRPPH) is disordered. Ser539 bears the Phosphoserine mark.

The protein belongs to the folylpolyglutamate synthase family. As to quaternary structure, monomer. Requires a monovalent cation as cofactor.

The protein localises to the mitochondrion inner membrane. It is found in the mitochondrion matrix. The protein resides in the cytoplasm. It catalyses the reaction (6S)-5,6,7,8-tetrahydrofolyl-(gamma-L-Glu)(n) + L-glutamate + ATP = (6S)-5,6,7,8-tetrahydrofolyl-(gamma-L-Glu)(n+1) + ADP + phosphate + H(+). It participates in cofactor biosynthesis; tetrahydrofolylpolyglutamate biosynthesis. In terms of biological role, catalyzes conversion of folates to polyglutamate derivatives allowing concentration of folate compounds in the cell and the intracellular retention of these cofactors, which are important substrates for most of the folate-dependent enzymes that are involved in one-carbon transfer reactions involved in purine, pyrimidine and amino acid synthesis. The polypeptide is Folylpolyglutamate synthase, mitochondrial (FPGS) (Cricetulus griseus (Chinese hamster)).